The primary structure comprises 177 residues: MEVATLGGGCFWCTEAVYKRVKGVISVKPGYSGGHVPNPTYEDVCTDTTGHAEVVQITFDSSIISYREILEIFFEIHDPTTLNRQGNDVGTQYRSIILYHNEEQRKIAEEMIREVEKRIGKKVVTELKPFEVFYEAEDYHHDFYDKHKYNPYCRLVISPKVKKFMKLFPDKVKIHEG.

Cys10 is a catalytic residue.

Belongs to the MsrA Met sulfoxide reductase family.

It carries out the reaction L-methionyl-[protein] + [thioredoxin]-disulfide + H2O = L-methionyl-(S)-S-oxide-[protein] + [thioredoxin]-dithiol. The enzyme catalyses [thioredoxin]-disulfide + L-methionine + H2O = L-methionine (S)-S-oxide + [thioredoxin]-dithiol. In terms of biological role, has an important function as a repair enzyme for proteins that have been inactivated by oxidation. Catalyzes the reversible oxidation-reduction of methionine sulfoxide in proteins to methionine. In Saccharolobus solfataricus (strain ATCC 35092 / DSM 1617 / JCM 11322 / P2) (Sulfolobus solfataricus), this protein is Peptide methionine sulfoxide reductase MsrA.